Reading from the N-terminus, the 251-residue chain is MFGFRLSVLLFAVCSLSACSCMFVNSCKYPPSQWCDSRDIAAQCGVLEQCMKFNASPVTVSLYYESLCPGCREFLVSQLVPTFIMLSDIMNIELVPYGNAQEKDDQGNYTFICQHGEDECRGNMIETCLLKALGPKAIPVIFCMESGADVLKAAQPCLGVYFPDTTWDSVMKCVTGDEGNKLMHQNALKTNALKPPHEYVPWITINGEHTDDLQDKATNSLFNLVCSLYKGEKPAACGQGLKKRTNSYCMN.

The first 21 residues, 1-21 (MFGFRLSVLLFAVCSLSACSC), serve as a signal peptide directing secretion. A Saposin A-type domain is found at 22–60 (MFVNSCKYPPSQWCDSRDIAAQCGVLEQCMKFNASPVTV). C68 and C71 are disulfide-bonded. The N-linked (GlcNAc...) asparagine glycan is linked to N108.

Belongs to the GILT family. As to quaternary structure, dimer; disulfide-linked. As to expression, highly expressed in spleen and kidney. Also detected at lower levels in liver, heart, brain, intestine and gill.

It is found in the secreted. Its subcellular location is the lysosome. Functionally, lysosomal thiol reductase that can reduce protein disulfide bonds. May facilitate the complete unfolding of proteins destined for lysosomal degradation. Plays an important role in antigen processing. This chain is Gamma-interferon-inducible lysosomal thiol reductase, found in Carassius auratus (Goldfish).